Reading from the N-terminus, the 228-residue chain is Thymidylate kinase (228 aa).

The span at 1 to 10 (MSDSAVQRSS) shows a compositional bias: polar residues. Residues 1–23 (MSDSAVQRSSGRGRFITFEGGEG) are disordered. 20–27 (GGEGTGKS) is an ATP binding site.

This sequence belongs to the thymidylate kinase family.

It carries out the reaction dTMP + ATP = dTDP + ADP. Phosphorylation of dTMP to form dTDP in both de novo and salvage pathways of dTTP synthesis. The polypeptide is Thymidylate kinase (Bradyrhizobium diazoefficiens (strain JCM 10833 / BCRC 13528 / IAM 13628 / NBRC 14792 / USDA 110)).